The chain runs to 60 residues: Large ribosomal subunit protein uL30 (60 aa).

It belongs to the universal ribosomal protein uL30 family. Part of the 50S ribosomal subunit.

The protein is Large ribosomal subunit protein uL30 of Clavibacter michiganensis subsp. michiganensis (strain NCPPB 382).